A 122-amino-acid chain; its full sequence is S-protein homolog 23 (122 aa).

An N-terminal signal peptide occupies residues 1–20 (MQNLSILLVCSFCILGHVSS). N86 carries an N-linked (GlcNAc...) asparagine glycan.

This sequence belongs to the plant self-incompatibility (S1) protein family.

It is found in the secreted. The chain is S-protein homolog 23 from Arabidopsis thaliana (Mouse-ear cress).